A 366-amino-acid chain; its full sequence is tRNA/tmRNA (uracil-C(5))-methyltransferase (366 aa).

5 residues coordinate S-adenosyl-L-methionine: glutamine 190, tyrosine 218, asparagine 223, glutamate 239, and aspartate 299. Cysteine 324 functions as the Nucleophile in the catalytic mechanism. Residue glutamate 358 is the Proton acceptor of the active site.

The protein belongs to the class I-like SAM-binding methyltransferase superfamily. RNA M5U methyltransferase family. TrmA subfamily.

The enzyme catalyses uridine(54) in tRNA + S-adenosyl-L-methionine = 5-methyluridine(54) in tRNA + S-adenosyl-L-homocysteine + H(+). It catalyses the reaction uridine(341) in tmRNA + S-adenosyl-L-methionine = 5-methyluridine(341) in tmRNA + S-adenosyl-L-homocysteine + H(+). Dual-specificity methyltransferase that catalyzes the formation of 5-methyluridine at position 54 (m5U54) in all tRNAs, and that of position 341 (m5U341) in tmRNA (transfer-mRNA). This Salmonella newport (strain SL254) protein is tRNA/tmRNA (uracil-C(5))-methyltransferase.